A 327-amino-acid chain; its full sequence is MTMESGAENQQSGDAAVTEAENQQMTVQAQPQIATLAQVSMPAAHATSSAPTVTLVQLPNGQTVQVHGVIQAAQPSVIQSPQVQTVQISTIAESEDSQESVDSVTDSQKRREILSRRPSYRKILNDLSSDAPGVPRIEEEKSEEETSAPAITTVTVPTPIYQTSSGQYIAITQGGAIQLANNGTDGVQGLQTLTMTNAAATQPGTTILQYAQTTDGQQILVPSNQVVVQAASGDVQTYQIRTAPTSTIAPGVVMASSPALPTQPAEEAARKREVRLMKNREAARECRRKKKEYVKCLENRVAVLENQNKTLIEELKALKDLYCHKSD.

Disordered regions lie at residues 1–26 (MTMESGAENQQSGDAAVTEAENQQMT) and 94–113 (SEDSQESVDSVTDSQKRREI). In terms of domain architecture, KID spans 87–146 (QISTIAESEDSQESVDSVTDSQKRREILSRRPSYRKILNDLSSDAPGVPRIEEEKSEEET). The residue at position 119 (Ser119) is a Phosphoserine; by CaMK1, CaMK2, CaMK4, PKB/AKT1 or PKB/AKT2, RPS6KA3, RPS6KA4, RPS6KA5, SGK1 and TSSK4. Lys122 is covalently cross-linked (Glycyl lysine isopeptide (Lys-Gly) (interchain with G-Cter in SUMO2)). The interval 125–148 (NDLSSDAPGVPRIEEEKSEEETSA) is disordered. A Phosphoserine modification is found at Ser128. Residue Ser257 is modified to Phosphoserine; by HIPK2. The bZIP domain occupies 269–327 (ARKREVRLMKNREAARECRRKKKEYVKCLENRVAVLENQNKTLIEELKALKDLYCHKSD). Positions 270-295 (RKREVRLMKNREAARECRRKKKEYVK) are basic motif. Residues Lys271 and Lys290 each participate in a glycyl lysine isopeptide (Lys-Gly) (interchain with G-Cter in SUMO1) cross-link. A leucine-zipper region spans residues 297-318 (LENRVAVLENQNKTLIEELKAL).

It belongs to the bZIP family. As to quaternary structure, interacts with PPRC1. Binds DNA as a dimer. This dimer is stabilized by magnesium ions. Interacts, through the bZIP domain, with the coactivators CRTC1/TORC1, CRTC2/TORC2 and CRTC3/TORC3. When phosphorylated on Ser-119, binds CREBBP. Interacts with CREBL2; regulates CREB1 phosphorylation, stability and transcriptional activity. Interacts (phosphorylated form) with TOX3. Interacts with ARRB1. Binds to HIPK2. Interacts with SGK1. Interacts with TSSK4; this interaction facilitates phosphorylation on Ser-119. Forms a complex with KMT2A and CREBBP. Interacts with TOX4; CREB1 is required for full induction of TOX4-dependent activity and the interaction is increased by cAMP and inhibited by insulin. (Microbial infection) Interacts with hepatitis B virus/HBV protein X. In terms of assembly, (Microbial infection) Interacts with HTLV-1 protein Tax. In terms of processing, stimulated by phosphorylation. Phosphorylation of both Ser-119 and Ser-128 in the SCN regulates the activity of CREB and participates in circadian rhythm generation. Phosphorylation of Ser-119 allows CREBBP binding. In liver, phosphorylation is induced by fasting or glucagon in a circadian fashion. CREBL2 positively regulates phosphorylation at Ser-119 thereby stimulating CREB1 transcriptional activity. Phosphorylated upon calcium influx by CaMK4 and CaMK2 on Ser-119. CaMK4 is much more potent than CaMK2 in activating CREB. Phosphorylated by CaMK2 on Ser-128. Phosphorylation of Ser-128 blocks CREB-mediated transcription even when Ser-119 is phosphorylated. Phosphorylated by CaMK1. Phosphorylation of Ser-257 by HIPK2 in response to genotoxic stress promotes CREB1 activity, facilitating the recruitment of the coactivator CBP. Phosphorylated at Ser-119 by RPS6KA3, RPS6KA4 and RPS6KA5 in response to mitogenic or stress stimuli. Phosphorylated by TSSK4 on Ser-119. Post-translationally, sumoylated with SUMO1. Sumoylation on Lys-290, but not on Lys-271, is required for nuclear localization of this protein. Sumoylation is enhanced under hypoxia, promoting nuclear localization and stabilization.

Its subcellular location is the nucleus. Its function is as follows. Phosphorylation-dependent transcription factor that stimulates transcription upon binding to the DNA cAMP response element (CRE), a sequence present in many viral and cellular promoters. Transcription activation is enhanced by the TORC coactivators which act independently of Ser-119 phosphorylation. Involved in different cellular processes including the synchronization of circadian rhythmicity and the differentiation of adipose cells. Regulates the expression of apoptotic and inflammatory response factors in cardiomyocytes in response to ERFE-mediated activation of AKT signaling. The polypeptide is Cyclic AMP-responsive element-binding protein 1 (CREB1) (Homo sapiens (Human)).